We begin with the raw amino-acid sequence, 219 residues long: Histidinol-phosphate aminotransferase (219 aa).

The protein belongs to the class-II pyridoxal-phosphate-dependent aminotransferase family. Histidinol-phosphate aminotransferase subfamily. Homodimer. Pyridoxal 5'-phosphate is required as a cofactor.

It catalyses the reaction L-histidinol phosphate + 2-oxoglutarate = 3-(imidazol-4-yl)-2-oxopropyl phosphate + L-glutamate. It participates in amino-acid biosynthesis; L-histidine biosynthesis; L-histidine from 5-phospho-alpha-D-ribose 1-diphosphate: step 7/9. The protein is Histidinol-phosphate aminotransferase (hisC) of Mycolicibacterium smegmatis (Mycobacterium smegmatis).